The sequence spans 105 residues: uncharacterized protein (105 aa).

Residues 41 to 62 traverse the membrane as a helical segment; it reads GIITKIAASPFVIVLYFNTAFF.

The protein resides in the membrane. This is an uncharacterized protein from Saccharomyces cerevisiae (strain ATCC 204508 / S288c) (Baker's yeast).